The primary structure comprises 411 residues: Arginine deiminase (411 aa).

The active-site Amidino-cysteine intermediate is the C401.

This sequence belongs to the arginine deiminase family.

It localises to the cytoplasm. The enzyme catalyses L-arginine + H2O = L-citrulline + NH4(+). Its pathway is amino-acid degradation; L-arginine degradation via ADI pathway; carbamoyl phosphate from L-arginine: step 1/2. This is Arginine deiminase from Streptococcus equi subsp. equi (strain 4047).